Here is a 368-residue protein sequence, read N- to C-terminus: Mediator of RNA polymerase II transcription subunit 2 (368 aa).

Residues 112–163 (KKKEQEEEEEKKKKQKEEEEKRKKELEEQERKKKEQEEEEKRRRQQEQDGDK) are compositionally biased toward basic and acidic residues. 2 disordered regions span residues 112-231 (KKKE…DSQS) and 265-308 (SNAN…NNET). The segment covering 177-192 (DLDTSQPGTSGQNDIK) has biased composition (polar residues). The span at 265-290 (SNANATTNSVPNNNNPATNDSNMNND) shows a compositional bias: low complexity.

The protein belongs to the Mediator complex subunit 2 family. As to quaternary structure, component of the Mediator complex.

The protein localises to the nucleus. Functionally, component of the Mediator complex, a coactivator involved in the regulated transcription of nearly all RNA polymerase II-dependent genes. Mediator functions as a bridge to convey information from gene-specific regulatory proteins to the basal RNA polymerase II transcription machinery. Mediator is recruited to promoters by direct interactions with regulatory proteins and serves as a scaffold for the assembly of a functional preinitiation complex with RNA polymerase II and the general transcription factors. The sequence is that of Mediator of RNA polymerase II transcription subunit 2 (MED2) from Candida glabrata (strain ATCC 2001 / BCRC 20586 / JCM 3761 / NBRC 0622 / NRRL Y-65 / CBS 138) (Yeast).